We begin with the raw amino-acid sequence, 398 residues long: MTDTILDPYFGEFGGMYVPEILIPVLKQLEKAFVEAQQDPAFQTEFLDLLKNYAGRPTALTLCRNLTKGTKTKLYLKREDLLHGGAHKTNQVLGQILLAKRMGKTRIIAETGAGQHGVATALACAMLGMPCRIYMGAKDVERQSPNVFRMRLMGAEVFPVTKGSSTLKDACCEAMRDWAANYENTHYLIGTAAGPHPFPTIVREFQKMIGEETKAQILQREGRLPDAVIACVGGGSNAIGMFTDFINETSVRLIGVEPAGKGIETGEHGAPLGHGKPGIYFGMKSPIMQTEDGQIEESYSISAGLDFPSVGPQHAYLNSIGRAEYPSITDDEALEAFKELAQHEGIIPALESSHALAYALKMARQNPMREQLLVVNLSGRGDKDIFTVDKIFSERGML.

K88 carries the post-translational modification N6-(pyridoxal phosphate)lysine.

The protein belongs to the TrpB family. As to quaternary structure, tetramer of two alpha and two beta chains. Pyridoxal 5'-phosphate is required as a cofactor.

It carries out the reaction (1S,2R)-1-C-(indol-3-yl)glycerol 3-phosphate + L-serine = D-glyceraldehyde 3-phosphate + L-tryptophan + H2O. Its pathway is amino-acid biosynthesis; L-tryptophan biosynthesis; L-tryptophan from chorismate: step 5/5. Functionally, the beta subunit is responsible for the synthesis of L-tryptophan from indole and L-serine. The sequence is that of Tryptophan synthase beta chain from Mannheimia succiniciproducens (strain KCTC 0769BP / MBEL55E).